We begin with the raw amino-acid sequence, 199 residues long: Probable nicotinate-nucleotide adenylyltransferase (199 aa).

The protein belongs to the NadD family.

It catalyses the reaction nicotinate beta-D-ribonucleotide + ATP + H(+) = deamido-NAD(+) + diphosphate. The protein operates within cofactor biosynthesis; NAD(+) biosynthesis; deamido-NAD(+) from nicotinate D-ribonucleotide: step 1/1. Its function is as follows. Catalyzes the reversible adenylation of nicotinate mononucleotide (NaMN) to nicotinic acid adenine dinucleotide (NaAD). This is Probable nicotinate-nucleotide adenylyltransferase from Chloroherpeton thalassium (strain ATCC 35110 / GB-78).